A 357-amino-acid polypeptide reads, in one-letter code: RGG repeats nuclear RNA binding protein C (357 aa).

An N-acetylalanine modification is found at Ala2. Residues 25-232 are disordered; sequence SQKVEKAAAA…AEEAEAREMT (208 aa). The span at 31 to 45 shows a compositional bias: low complexity; the sequence is AAAAVQPPKAAKFPT. 2 stretches are compositionally biased toward gly residues: residues 63–82 and 114–128; these read GGRGGTGGRGGFSRGRGNGG and SRGGSVGGYRVGGGR. Residues 143–155 are compositionally biased toward basic and acidic residues; the sequence is DVERPPRNYDRHS. The segment covering 159-172 has biased composition (gly residues); that stretch reads HGTGMKRNGGGRGN. Basic and acidic residues predominate over residues 190 to 232; sequence EVEKSPVAEKQGGEDETPEAKKELTAEEKAQKEAEEAEAREMT. Positions 239-299 constitute an FF domain; sequence ILEEKKKALQ…KDATEKAKKS (61 aa). Residues 308 to 357 form a disordered region; the sequence is PADGKRYNGRGGGSRGRGGRGGRGEGGNQRYAKEAAAPAIGDTAQFPSLG. Gly residues predominate over residues 316–334; that stretch reads GRGGGSRGRGGRGGRGEGG. Phosphoserine is present on Ser355.

Belongs to the SERBP1-HABP4 family.

It is found in the nucleus. It localises to the cytoplasm. The protein localises to the perinuclear region. Ribosome-binding protein that acts as a regulator of mRNA translation by promoting ribosome inactivation. Binds RNA. The protein is RGG repeats nuclear RNA binding protein C of Arabidopsis thaliana (Mouse-ear cress).